The following is a 185-amino-acid chain: Ribosome-recycling factor (185 aa).

It belongs to the RRF family.

The protein resides in the cytoplasm. Its function is as follows. Responsible for the release of ribosomes from messenger RNA at the termination of protein biosynthesis. May increase the efficiency of translation by recycling ribosomes from one round of translation to another. In Legionella pneumophila (strain Corby), this protein is Ribosome-recycling factor.